The chain runs to 166 residues: Small ribosomal subunit protein uS4 (166 aa).

One can recognise an S4 RNA-binding domain in the interval 103–165 (RRLQTVVYKK…PTSPYFKKAQ (63 aa)).

It belongs to the universal ribosomal protein uS4 family. In terms of assembly, part of the 30S ribosomal subunit. Contacts protein S5. The interaction surface between S4 and S5 is involved in control of translational fidelity.

In terms of biological role, one of the primary rRNA binding proteins, it binds directly to 16S rRNA where it nucleates assembly of the body of the 30S subunit. With S5 and S12 plays an important role in translational accuracy. This chain is Small ribosomal subunit protein uS4, found in Ignicoccus hospitalis (strain KIN4/I / DSM 18386 / JCM 14125).